A 479-amino-acid chain; its full sequence is Deoxyribodipyrimidine photo-lyase (479 aa).

Positions 6–137 constitute a Photolyase/cryptochrome alpha/beta domain; it reads SLKAVWFRRD…PFYTFEDAYL (132 aa). FAD is bound at residue Tyr-229. Residue Arg-233 participates in DNA binding. Residues 241–245 and 278–285 each bind FAD; these read TSRLS and ELAWRDFY. 2 interaction with DNA regions span residues 278–285 and 344–345; these read ELAWRDFY and NR. An FAD-binding site is contributed by 375–377; the sequence is DYD. Residue Gln-407 participates in DNA binding.

This sequence belongs to the DNA photolyase class-1 family. Monomer. FAD serves as cofactor. Requires (6R)-5,10-methylene-5,6,7,8-tetrahydrofolate as cofactor.

The enzyme catalyses cyclobutadipyrimidine (in DNA) = 2 pyrimidine residues (in DNA).. In terms of biological role, involved in repair of UV radiation-induced DNA damage. Catalyzes the light-dependent monomerization (300-600 nm) of cyclobutyl pyrimidine dimers (in cis-syn configuration), which are formed between adjacent bases on the same DNA strand upon exposure to ultraviolet radiation. The chain is Deoxyribodipyrimidine photo-lyase (phr) from Alkalihalophilus pseudofirmus (strain ATCC BAA-2126 / JCM 17055 / OF4) (Bacillus pseudofirmus).